The chain runs to 171 residues: Adenine phosphoribosyltransferase (171 aa).

The protein belongs to the purine/pyrimidine phosphoribosyltransferase family. As to quaternary structure, homodimer.

The protein localises to the cytoplasm. The catalysed reaction is AMP + diphosphate = 5-phospho-alpha-D-ribose 1-diphosphate + adenine. The protein operates within purine metabolism; AMP biosynthesis via salvage pathway; AMP from adenine: step 1/1. Its function is as follows. Catalyzes a salvage reaction resulting in the formation of AMP, that is energically less costly than de novo synthesis. This is Adenine phosphoribosyltransferase from Mycoplasmopsis fermentans (strain ATCC 19989 / NBRC 14854 / NCTC 10117 / PG18) (Mycoplasma fermentans).